Reading from the N-terminus, the 163-residue chain is Deoxyuridine 5'-triphosphate nucleotidohydrolase (163 aa).

Residues 78–80, Asn91, and 95–97 each bind substrate; these read RSG and TVD. Basic and acidic residues predominate over residues 140 to 151; that stretch reads ERESLNETERGD. A disordered region spans residues 140-163; it reads ERESLNETERGDGGFGHTGVNSQP.

It belongs to the dUTPase family. Requires Mg(2+) as cofactor.

The catalysed reaction is dUTP + H2O = dUMP + diphosphate + H(+). It participates in pyrimidine metabolism; dUMP biosynthesis; dUMP from dCTP (dUTP route): step 2/2. Its function is as follows. This enzyme is involved in nucleotide metabolism: it produces dUMP, the immediate precursor of thymidine nucleotides and it decreases the intracellular concentration of dUTP so that uracil cannot be incorporated into DNA. This is Deoxyuridine 5'-triphosphate nucleotidohydrolase from Heliobacterium modesticaldum (strain ATCC 51547 / Ice1).